Consider the following 60-residue polypeptide: Large ribosomal subunit protein bL32 (60 aa).

This sequence belongs to the bacterial ribosomal protein bL32 family.

The sequence is that of Large ribosomal subunit protein bL32 from Streptococcus pneumoniae serotype 4 (strain ATCC BAA-334 / TIGR4).